Here is a 553-residue protein sequence, read N- to C-terminus: uncharacterized protein (553 aa).

Transmembrane regions (helical) follow at residues 13–30 (ALQAVVVLSLISAIGLGL), 37–59 (GISLGVTFVFFAGILAGHFGLSI), 69–91 (SFGLIIFVYALGLQVGPGFFSSF), 98–120 (LNMLAIAVVILGTFLAVVCSYTT), and 157–179 (TPALGCAVAYPLGVIGVILAVLL). RCK C-terminal domains lie at 190–273 (LEVQ…LFGE) and 281–365 (KEDI…VLGN). 6 helical membrane passes run 375–397 (LVAVFVGIILGLALGAVPFSIPG), 402–424 (VRLGLAGGPIIVGILIGTFGPRL), 436–458 (LMLRALGLSLYLACLGLDAGAHF), 468–490 (LLWIGLGFGLTLVPTVLVGFFAF), 497–514 (FGSVSGMLCGSMANPMAL), and 529–551 (AYATVYPLSMFLRVIIAQVLLMF).

Belongs to the AAE transporter (TC 2.A.81) family.

It is found in the cell membrane. This is an uncharacterized protein from Bacteroides fragilis (strain YCH46).